Here is a 426-residue protein sequence, read N- to C-terminus: 2-(3-amino-3-carboxypropyl)histidine synthase subunit 1 (426 aa).

The [4Fe-4S] cluster site is built by C133, C239, and C368.

Belongs to the DPH1/DPH2 family. DPH1 subfamily. In terms of assembly, component of the 2-(3-amino-3-carboxypropyl)histidine synthase complex composed of DPH1, DPH2, DPH3 and a NADH-dependent reductase, predominantly CBR1. [4Fe-4S] cluster is required as a cofactor.

The protein resides in the cytoplasm. It carries out the reaction L-histidyl-[translation elongation factor 2] + S-adenosyl-L-methionine = 2-[(3S)-amino-3-carboxypropyl]-L-histidyl-[translation elongation factor 2] + S-methyl-5'-thioadenosine + H(+). Its pathway is protein modification; peptidyl-diphthamide biosynthesis. Functionally, catalyzes the first step of diphthamide biosynthesis, a post-translational modification of histidine which occurs in elongation factor 2. DPH1 and DPH2 transfer a 3-amino-3-carboxypropyl (ACP) group from S-adenosyl-L-methionine (SAM) to a histidine residue, the reaction is assisted by a reduction system comprising DPH3 and a NADH-dependent reductase, predominantly CBR1. The chain is 2-(3-amino-3-carboxypropyl)histidine synthase subunit 1 (DPH1) from Eremothecium gossypii (strain ATCC 10895 / CBS 109.51 / FGSC 9923 / NRRL Y-1056) (Yeast).